An 800-amino-acid polypeptide reads, in one-letter code: Nuclear poly(A) polymerase 2 (800 aa).

ATP contacts are provided by residues Phe-103–Ser-105, Ala-115–Asp-118, Asp-171, Lys-232, Tyr-241, and Gly-250–Val-251. Residues Asp-116, Asp-118, and Asp-171 each coordinate Mg(2+). Short sequence motifs (nuclear localization signal) lie at residues Arg-487–Phe-494 and Lys-533–Ile-540. A disordered region spans residues Pro-497–Gln-576. Positions Ser-527–Asp-538 are enriched in basic and acidic residues. The span at Pro-564–Pro-575 shows a compositional bias: polar residues.

Belongs to the poly(A) polymerase family. In terms of assembly, monomer. Forms a complex with cleavage and polyadenylation specificity factor (CPSF) subunits CPSF100, CPSF30, FIPS5 and PABN2. The cofactor is Mg(2+). Mn(2+) is required as a cofactor. As to expression, mostly expressed in flowers (highly in the style, receptacle and pedicel, but weakly in the vasculature of sepals) and hypocotyls, and, to a lower extent, in roots and stems. Barely detected in leaves (petioles and vascular system).

The protein localises to the nucleus. Its subcellular location is the cytoplasm. The enzyme catalyses RNA(n) + ATP = RNA(n)-3'-adenine ribonucleotide + diphosphate. In terms of biological role, essential protein. Polymerase that creates the 3'-poly(A) tail of mRNA's. Also required for the endoribonucleolytic cleavage reaction at some polyadenylation sites. May acquire specificity through interaction with a cleavage and polyadenylation specificity factor (CPSF) at its C-terminus. Mediates the polyadenylation of RNAs that are associated with polynucleotide phosphorylase (e.g. PNP1). This Arabidopsis thaliana (Mouse-ear cress) protein is Nuclear poly(A) polymerase 2.